A 142-amino-acid polypeptide reads, in one-letter code: 3-hydroxyacyl-[acyl-carrier-protein] dehydratase FabZ (142 aa).

His-48 is a catalytic residue.

It belongs to the thioester dehydratase family. FabZ subfamily.

It is found in the cytoplasm. It carries out the reaction a (3R)-hydroxyacyl-[ACP] = a (2E)-enoyl-[ACP] + H2O. Involved in unsaturated fatty acids biosynthesis. Catalyzes the dehydration of short chain beta-hydroxyacyl-ACPs and long chain saturated and unsaturated beta-hydroxyacyl-ACPs. This Desulforamulus reducens (strain ATCC BAA-1160 / DSM 100696 / MI-1) (Desulfotomaculum reducens) protein is 3-hydroxyacyl-[acyl-carrier-protein] dehydratase FabZ.